We begin with the raw amino-acid sequence, 351 residues long: Dihydroorotate dehydrogenase (quinone) (351 aa).

FMN-binding positions include 67–71 (AGFDK) and Thr-91. Lys-71 lines the substrate pocket. Position 116-120 (116-120 (NAMGF)) interacts with substrate. Positions 145 and 178 each coordinate FMN. Asn-178 is a binding site for substrate. Ser-181 functions as the Nucleophile in the catalytic mechanism. Residue Asn-183 participates in substrate binding. FMN is bound by residues Lys-214 and Thr-242. Residue 243-244 (NT) coordinates substrate. FMN-binding positions include Gly-262, Gly-291, and 312-313 (YT).

The protein belongs to the dihydroorotate dehydrogenase family. Type 2 subfamily. As to quaternary structure, monomer. Requires FMN as cofactor.

It localises to the cell membrane. It catalyses the reaction (S)-dihydroorotate + a quinone = orotate + a quinol. The protein operates within pyrimidine metabolism; UMP biosynthesis via de novo pathway; orotate from (S)-dihydroorotate (quinone route): step 1/1. Its function is as follows. Catalyzes the conversion of dihydroorotate to orotate with quinone as electron acceptor. This Nitratiruptor sp. (strain SB155-2) protein is Dihydroorotate dehydrogenase (quinone).